The following is a 282-amino-acid chain: Large ribosomal subunit protein uL2 (282 aa).

Disordered regions lie at residues 31 to 55 and 223 to 282; these read KRLT…RHIG and LAMN…NTQR. Composition is skewed to basic residues over residues 34–55 and 270–282; these read TKPV…RHIG and VTRR…NTQR.

The protein belongs to the universal ribosomal protein uL2 family. In terms of assembly, part of the 50S ribosomal subunit. Forms a bridge to the 30S subunit in the 70S ribosome.

In terms of biological role, one of the primary rRNA binding proteins. Required for association of the 30S and 50S subunits to form the 70S ribosome, for tRNA binding and peptide bond formation. It has been suggested to have peptidyltransferase activity; this is somewhat controversial. Makes several contacts with the 16S rRNA in the 70S ribosome. This Anaeromyxobacter dehalogenans (strain 2CP-C) protein is Large ribosomal subunit protein uL2.